A 339-amino-acid chain; its full sequence is Heat-inducible transcription repressor HrcA (339 aa).

Belongs to the HrcA family.

Functionally, negative regulator of class I heat shock genes (grpE-dnaK-dnaJ and groELS operons). Prevents heat-shock induction of these operons. The chain is Heat-inducible transcription repressor HrcA from Frankia casuarinae (strain DSM 45818 / CECT 9043 / HFP020203 / CcI3).